A 919-amino-acid polypeptide reads, in one-letter code: MFRKARRVNVRKRNDSEEEERERDEEQEPPPLLPPPASGEEPGPGGGDRAPAGESLLGPGPLPPPPSAHHPGLGAEAGGGISGGAEPGNGLKPRKRPRENKEVPRASLLSFQDEEEENEEVFKVKKSSYSKKIVKLLKKEYKEDLEKSKIKTELNTAADSDQPLDKTCHAKDTNPEDGVVISEHGEDEMDMESEKEEEKPKAGGAFSNALSSLNVLRPGEIPDAAFIHAARKKRQLARELGDFTPHDSEPGKGRLVREDENDASDDEDDDEKRRIVFSVKEKSQRQKIAEEIGIEGSDDDALVTGEQDEELSRWEQEQIRKGINIPQVQASQPSEVNVYYQNTYQTMPYGASYGIPYSYTAYGSSDAKSQKTDNTVPFKTPSNEMAPVTIDLVKRQLKDRLDSMKELHKTNQQQHEKHLQSRVDSTRAIERLEGSSGGIGERYKFLQEMRGYVQDLLECFSEKVPLINELESAIHQLYKQRASRLVQRRQDDIKDESSEFSSHSNKALMAPNLDSFGRDRALYQEHAKRRIAEREARRTRRRQAREQTGQMADHLEGLSSDDEETSTDITNFNLEKDRILKESSKVFEDVLESFYSIDCIKAQFEAWRSKYYMSYKDAYIGLCLPKLFNPLIRLQLLTWTPLEAKCRDFETMLWFESLLFYGCEDREQEKDEADVALLPTIVEKVILPKLTVIAETMWDPFSTTQTSRMVGITMKLINGYPSVVNADNKNTQVYLKALLLRMRRTLDDDVFMPLYPKNVLENKNSGPYLFFQRQFWSSVKLLGNFLQWYGIFSNKTLQELSIDGLLNRYILMAFQNSEYGDDSIRKAQNVINCFPKQWFVNLKGERTISQLENFCRYLVHLADTIYRNSIGCSDVEKRNARENIKQIVKLLASVRALDHAISVASDHNVKEVKSLIEGK.

The segment covering 1–11 has biased composition (basic residues); it reads MFRKARRVNVR. Disordered regions lie at residues 1–120, 151–206, and 237–277; these read MFRK…ENEE, KTEL…GGAF, and AREL…RIVF. Phosphoserine is present on Ser-16. Residues 16–28 are compositionally biased toward acidic residues; that stretch reads SEEEERERDEEQE. Residues 49–59 are compositionally biased toward low complexity; it reads RAPAGESLLGP. Residues 75–87 are compositionally biased toward gly residues; sequence AEAGGGISGGAEP. A Glycyl lysine isopeptide (Lys-Gly) (interchain with G-Cter in SUMO1); alternate cross-link involves residue Lys-151. A Glycyl lysine isopeptide (Lys-Gly) (interchain with G-Cter in SUMO2); alternate cross-link involves residue Lys-151. A Phosphoserine modification is found at Ser-160. Residues 163–174 are compositionally biased toward basic and acidic residues; the sequence is PLDKTCHAKDTN. The segment covering 185–195 has biased composition (acidic residues); that stretch reads GEDEMDMESEK. At Ser-193 the chain carries Phosphoserine. Residues 237-258 show a composition bias toward basic and acidic residues; sequence ARELGDFTPHDSEPGKGRLVRE. Acidic residues predominate over residues 259–270; sequence DENDASDDEDDD. Phosphoserine is present on residues Ser-264, Ser-297, Ser-559, and Ser-560. Positions 380-560 are necessary and sufficient for interaction with PAX7; it reads TPSNEMAPVT…MADHLEGLSS (181 aa). The interval 533 to 566 is disordered; that stretch reads EREARRTRRRQAREQTGQMADHLEGLSSDDEETS. Thr-565 carries the phosphothreonine modification.

This sequence belongs to the GCF family. In terms of assembly, interacts with PAX3 and PAX7. Interacts with WDR5; associates with a histone methyltransferase (HMT) complex composed at least of RBBP5, ASH2L, SET1, SET2 and KMT2A/MLL1, KMT2D/MLL2, KMT2C/MLL3 and KMT2B/MLL4 through direct interaction with WDR5. As to expression, ubiquitously expressed in all tissues tested including skeletal muscle. Expressed in primary myoblasts.

It localises to the nucleus. In terms of biological role, adapter protein linking the transcription factors PAX3 and PAX7 to the histone methylation machinery and involved in myogenesis. Associates with a histone methyltransferase complex that specifically mediates dimethylation and trimethylation of 'Lys-4' of histone H3. Mediates the recruitment of that complex to the transcription factors PAX3 and PAX7 on chromatin to regulate the expression of genes involved in muscle progenitor cells proliferation including ID3 and CDC20. The protein is PAX3- and PAX7-binding protein 1 (Paxbp1) of Mus musculus (Mouse).